The primary structure comprises 307 residues: MMEVTFLGTSSAVPSKNRNHTSIALRIPGEIFLFDCGEGTQRQMALAGISPMKVTRIFITHLHGDHILGIPGMIQSMGFRGREEPLDIYGPPGIHELHECIMKMGYFTLDFDINVHEVRGGTVVEEDDYRVTSAPASHSVFNLAYCFEEKKRPRFLREKAIALGLKPGPAFGKLHRGIPVRVGDRIIMPEEVLGSPRKGVKVCYSGDTRPCESVIKLAEGAELLIHESTLEAGSEDKAAESGHSTAREAAEVARSAGVKRLILTHLSTRYKRTEVILEAARQVFPVTDVADDLMTVEVKAYDSSPDS.

Zn(2+) is bound by residues histidine 61, histidine 63, aspartate 65, histidine 66, histidine 138, aspartate 207, and histidine 265. The active-site Proton acceptor is aspartate 65.

This sequence belongs to the RNase Z family. In terms of assembly, homodimer. Requires Zn(2+) as cofactor.

It carries out the reaction Endonucleolytic cleavage of RNA, removing extra 3' nucleotides from tRNA precursor, generating 3' termini of tRNAs. A 3'-hydroxy group is left at the tRNA terminus and a 5'-phosphoryl group is left at the trailer molecule.. Functionally, zinc phosphodiesterase, which displays some tRNA 3'-processing endonuclease activity. Probably involved in tRNA maturation, by removing a 3'-trailer from precursor tRNA. This chain is Ribonuclease Z, found in Methanothermobacter thermautotrophicus (strain ATCC 29096 / DSM 1053 / JCM 10044 / NBRC 100330 / Delta H) (Methanobacterium thermoautotrophicum).